Reading from the N-terminus, the 576-residue chain is V-type ATP synthase alpha chain (576 aa).

238–245 (GPFGAGKT) contacts ATP.

Belongs to the ATPase alpha/beta chains family.

It catalyses the reaction ATP + H2O + 4 H(+)(in) = ADP + phosphate + 5 H(+)(out). Produces ATP from ADP in the presence of a proton gradient across the membrane. The V-type alpha chain is a catalytic subunit. The protein is V-type ATP synthase alpha chain of Borrelia duttonii (strain Ly).